The primary structure comprises 498 residues: Zinc finger protein 497 (498 aa).

The segment at 30-104 (SEGAVSGGWG…LRPSPLPEEP (75 aa)) is disordered. 14 consecutive C2H2-type zinc fingers follow at residues 106 to 128 (CRCGECGKAFSQGSYLLQHRRVH), 134 to 156 (YTCPECGKAFAWSSNLSQHQRIH), 162 to 184 (YACRECGKAFRAHSQLIHHQETH), 190 to 212 (FRCPDCGKSFGRSTTLVQHRRTH), 218 to 240 (YECPECGKAFSWNSNFLEHRRVH), 246 to 268 (HACRDCGKAFSQSSNLAEHLKIH), 274 to 296 (HACPDCGKAFVRVAGLRQHRRTH), 302 to 324 (FPCAECGKAFRESSQLLQHQRTH), 330 to 352 (FECAECGQAFVMGSYLAEHRRVH), 358 to 380 (HACAQCGKAFSQRSNLLSHRRTH), 386 to 408 (FACADCGKAFRGSSGLAHHRLSH), 414 to 436 (FACAECGKAFRGSSELRQHQRLH), 442 to 464 (FVCAHCSKAFVRKSELLSHRRTH), and 470 to 492 (YACGECGKPFSHRCNLNEHQKRH).

Belongs to the krueppel C2H2-type zinc-finger protein family.

It is found in the nucleus. Functionally, may be involved in transcriptional regulation. The chain is Zinc finger protein 497 (ZNF497) from Homo sapiens (Human).